The chain runs to 82 residues: Leucinostatins biosynthesis cluster protein M (82 aa).

Positions 34–82 (ARNETHDPSGPRAPVSSMRLGPRSRPYHHGTARLRGSPNCSRDSSSAAT) are disordered. The span at 71–82 (PNCSRDSSSAAT) shows a compositional bias: polar residues.

Functionally, part of the gene cluster that mediates the biosynthesis of the lipopeptide antibiotics leucinostatins that show extensive biological activities, including antimalarial, antiviral, antibacterial, antifungal, and antitumor activities, as well as phytotoxic. The function of lcsM within the leucinostatins biosynthesis has not been identified yet. The chain is Leucinostatins biosynthesis cluster protein M from Purpureocillium lilacinum (Paecilomyces lilacinus).